We begin with the raw amino-acid sequence, 616 residues long: Proline--tRNA ligase (616 aa).

This sequence belongs to the class-II aminoacyl-tRNA synthetase family. ProS type 1 subfamily. As to quaternary structure, homodimer.

Its subcellular location is the cytoplasm. The enzyme catalyses tRNA(Pro) + L-proline + ATP = L-prolyl-tRNA(Pro) + AMP + diphosphate. Functionally, catalyzes the attachment of proline to tRNA(Pro) in a two-step reaction: proline is first activated by ATP to form Pro-AMP and then transferred to the acceptor end of tRNA(Pro). As ProRS can inadvertently accommodate and process non-cognate amino acids such as alanine and cysteine, to avoid such errors it has two additional distinct editing activities against alanine. One activity is designated as 'pretransfer' editing and involves the tRNA(Pro)-independent hydrolysis of activated Ala-AMP. The other activity is designated 'posttransfer' editing and involves deacylation of mischarged Ala-tRNA(Pro). The misacylated Cys-tRNA(Pro) is not edited by ProRS. The protein is Proline--tRNA ligase of Streptococcus sanguinis (strain SK36).